Here is a 359-residue protein sequence, read N- to C-terminus: Serpentine receptor class epsilon-26 (359 aa).

7 consecutive transmembrane segments (helical) span residues 29–49, 66–86, 127–147, 172–192, 195–215, 256–276, and 282–302; these read CAIS…VFVS, IGVP…ITIL, VAGF…LAIV, FIII…FNIL, YVLN…YYYI, LVFV…ALVL, and FFMH…FLVV.

It belongs to the nematode receptor-like protein sre family.

It localises to the membrane. This Caenorhabditis elegans protein is Serpentine receptor class epsilon-26 (sre-26).